The following is a 375-amino-acid chain: Queuine tRNA-ribosyltransferase (375 aa).

Residue aspartate 89 is the Proton acceptor of the active site. Substrate-binding positions include 89 to 93 (DSGGF), aspartate 143, glutamine 187, and glycine 214. The tract at residues 245–251 (GVGKPED) is RNA binding. The active-site Nucleophile is the aspartate 264. Residues 269–273 (TRNAR) form an RNA binding; important for wobble base 34 recognition region. Cysteine 302, cysteine 304, cysteine 307, and histidine 333 together coordinate Zn(2+).

The protein belongs to the queuine tRNA-ribosyltransferase family. In terms of assembly, homodimer. Within each dimer, one monomer is responsible for RNA recognition and catalysis, while the other monomer binds to the replacement base PreQ1. Zn(2+) serves as cofactor.

The enzyme catalyses 7-aminomethyl-7-carbaguanine + guanosine(34) in tRNA = 7-aminomethyl-7-carbaguanosine(34) in tRNA + guanine. It functions in the pathway tRNA modification; tRNA-queuosine biosynthesis. Its function is as follows. Catalyzes the base-exchange of a guanine (G) residue with the queuine precursor 7-aminomethyl-7-deazaguanine (PreQ1) at position 34 (anticodon wobble position) in tRNAs with GU(N) anticodons (tRNA-Asp, -Asn, -His and -Tyr). Catalysis occurs through a double-displacement mechanism. The nucleophile active site attacks the C1' of nucleotide 34 to detach the guanine base from the RNA, forming a covalent enzyme-RNA intermediate. The proton acceptor active site deprotonates the incoming PreQ1, allowing a nucleophilic attack on the C1' of the ribose to form the product. After dissociation, two additional enzymatic reactions on the tRNA convert PreQ1 to queuine (Q), resulting in the hypermodified nucleoside queuosine (7-(((4,5-cis-dihydroxy-2-cyclopenten-1-yl)amino)methyl)-7-deazaguanosine). The chain is Queuine tRNA-ribosyltransferase from Salmonella agona (strain SL483).